Consider the following 437-residue polypeptide: Carboxypeptidase A6 (437 aa).

Positions 1–30 (MKCLGKRRGQAAAFLPLCWLFLKILQPGHS) are cleaved as a signal peptide. Positions 31–129 (HLYNNRYAGD…SSLHTQRNRR (99 aa)) are cleaved as a propeptide — activation peptide. N-linked (GlcNAc...) asparagine glycosylation is found at N89 and N153. A Peptidase M14 domain is found at 138–432 (VYHSLEEIQN…LAVKNITMHL (295 aa)). Residues H196 and E199 each contribute to the Zn(2+) site. Residues 196-199 (HARE), R254, and 271-272 (NR) contribute to the substrate site. C265 and C288 form a disulfide bridge. H324 contacts Zn(2+). Substrate is bound by residues 325-326 (AY) and Y376. Residue E398 is the Proton donor/acceptor of the active site. A glycan (N-linked (GlcNAc...) asparagine) is linked at N427.

Belongs to the peptidase M14 family. The cofactor is Zn(2+). Expressed in the hippocampus, nucleus raphe, and cortex.

It localises to the secreted. It is found in the extracellular space. The protein resides in the extracellular matrix. Functionally, may be involved in the proteolytic inactivation of enkephalins and neurotensin in some brain areas. May convert inactive angiotensin I into the biologically active angiotensin II. Releases a C-terminal amino acid, with preference for large hydrophobic C-terminal amino acids and shows only very weak activity toward small amino acids and histidine. In Homo sapiens (Human), this protein is Carboxypeptidase A6 (CPA6).